We begin with the raw amino-acid sequence, 140 residues long: MFAVLKTGGKQYRVQAGDVLRVEKLNAEAGDKVQFNDVLMIGSAVGAPLVAGAAVQAEVIDTIKADKVITYVKRRRKHSSQRTRGHRQQLTLVRITDLLEKGGDKSGVKPAVGARTKIEPAVKPAKAKKSEAEASAEDAN.

The tract at residues serine 106–asparagine 140 is disordered.

The protein belongs to the bacterial ribosomal protein bL21 family. Part of the 50S ribosomal subunit. Contacts protein L20.

In terms of biological role, this protein binds to 23S rRNA in the presence of protein L20. This chain is Large ribosomal subunit protein bL21, found in Paracoccus denitrificans (strain Pd 1222).